The primary structure comprises 375 residues: MYLEHLHLHSFRNYAEQVLKFESKKTILLGNNAQGKSNLLEAIELLATLKSHRVSKDRDLVLESDSEARIFARVNRLYGASELSLILRSSGRRTVIRDRQPLRRHLDFLGVINAVQFSSLDLDLVRGGPEARRDWLDTLLIQLEPLYVHILQQYNQVLRQRNALLKEIRKQELEGKVYGDLSQLKLWDLQLAETGSRVTRRRARVLQRLIPLAQKWHESISGKTELLELQYIPNVPWVEDDVNGVQRAFLDKIETRRLAEKQLGTSVVGPHRDEVDFLINQNPAKSYGSQGQQRTLVLALKLAELQLLEQIIGEPPLLLLDDVLAELDIERQNQLLDAIEDRFQTLITTTHLSSFESRWLQSSQVFSVKKGHIFY.

Gly30 to Ser37 contacts ATP.

This sequence belongs to the RecF family.

The protein localises to the cytoplasm. Its function is as follows. The RecF protein is involved in DNA metabolism; it is required for DNA replication and normal SOS inducibility. RecF binds preferentially to single-stranded, linear DNA. It also seems to bind ATP. The protein is DNA replication and repair protein RecF of Microcystis aeruginosa (strain NIES-843 / IAM M-2473).